The sequence spans 97 residues: Large ribosomal subunit protein bL27 (97 aa).

A propeptide spanning residues 1-12 (MLKMTLNNLQLF) is cleaved from the precursor. The disordered stretch occupies residues 13 to 37 (AHKKGGGSTSNGRDSQAKRLGAKAA).

Belongs to the bacterial ribosomal protein bL27 family. In terms of processing, the N-terminus is cleaved by ribosomal processing cysteine protease Prp.

The protein is Large ribosomal subunit protein bL27 of Streptococcus pneumoniae serotype 2 (strain D39 / NCTC 7466).